The following is a 906-amino-acid chain: MAKIYVDSKIYNVNESDNLLQACLSVGINIPYFCWHPLLGSLGACRQCAVTQYDNFQDRKGRLIMSCMTPVTDGAIISIKSTESEVFRSAIVELLLTNHPHDCPVCEEGGHCHLQDMTVMVKHSMRNYRFKKRTHKNQYLGPFIKHEMNRCIACYRCVRYYNEYADGVDFGVYGSNNNVYFGRIEDGVLESEHSGNLIELCPTGVFTDKTHSKKYNRKWDMQYAPGICHNCSVGCNISIGERYGEIRRIENRYHENINHYLICDLGRFGYSHTNLNTRPKKPTYVNKYNDLNVLNFNEAIKIGVDFFKRYKRVIGVGSARSSIENNFALQELVGKENFSNGMSNKEKECIKSILEFLKNNYIYIPSLKEIESYDVILVLGEDLTQTSSRVALAVRQAVKKKVQDIKNLYGIPKWNTSSNIHISEKFKNSLYIMHTHESKLDDISEWSYFASIDKQVNLASSIAYEIDKSSPKVSNLDSELKEKVLLISDRLISSKKTLIISGSHSFSDSIIKASINIAKAIKFRAPDHHVGVTLLTSSVNSLGAELLGGMSIESALDDLKKEKADAVIFMEYDLYRSVSEYDCEYFFKNKDNIITLDHQYTQTFKKSMLSLPSTNFTESSGTVINFEGRAQRFFQVYDPNFYDKSNCLCDSWKWLHTIKSKINNTEICWFNLDDVINSYAEKYSIFKQIKTNELNSNLRIHGQKISRSPIRSSGRTSLRSNIDVHEPCQPKDINTMFAFSMEGYNQPNSSVSNIPFAWFPGWNSPQAWNKFQVEVGRNLISGDSGIHIFKKYEKKTDVYSNIVLKNSIKEKYWNIIPYYHLFGNEELTQYSSIIQENTPLEYALIGLSDAIKMGLKKDSIVEFNCLKKDYCLPVQVSKYLTEKQIGLPIGRKGFPLALVGEKIEFL.

A 2Fe-2S ferredoxin-type domain is found at 2–83 (AKIYVDSKIY…GAIISIKSTE (82 aa)). 4 residues coordinate [2Fe-2S] cluster: Cys-34, Cys-45, Cys-48, and Cys-67. Positions 83–122 (ESEVFRSAIVELLLTNHPHDCPVCEEGGHCHLQDMTVMVK) constitute a 4Fe-4S His(Cys)3-ligated-type domain. Residues His-99, Cys-103, Cys-106, Cys-112, Cys-151, Cys-154, Cys-157, Cys-201, Cys-228, Cys-231, Cys-235, and Cys-263 each contribute to the [4Fe-4S] cluster site. A 4Fe-4S Mo/W bis-MGD-type domain is found at 221 to 277 (MQYAPGICHNCSVGCNISIGERYGEIRRIENRYHENINHYLICDLGRFGYSHTNLNT).

This sequence belongs to the complex I 75 kDa subunit family. Composed of 13 different subunits. Subunits NuoCD, E, F, and G constitute the peripheral sector of the complex. [2Fe-2S] cluster serves as cofactor. Requires [4Fe-4S] cluster as cofactor.

It catalyses the reaction a quinone + NADH + 5 H(+)(in) = a quinol + NAD(+) + 4 H(+)(out). Its function is as follows. NDH-1 shuttles electrons from NADH, via FMN and iron-sulfur (Fe-S) centers, to quinones in the respiratory chain. Couples the redox reaction to proton translocation (for every two electrons transferred, four hydrogen ions are translocated across the cytoplasmic membrane), and thus conserves the redox energy in a proton gradient. In Buchnera aphidicola subsp. Acyrthosiphon pisum (strain APS) (Acyrthosiphon pisum symbiotic bacterium), this protein is NADH-quinone oxidoreductase subunit G (nuoG).